The primary structure comprises 396 residues: Probable isocitrate dehydrogenase [NAD] gamma 2, mitochondrial (396 aa).

Residues 1–25 (MLAVTSCSMKTVLQYAVFLGHSREV) constitute a mitochondrion transit peptide. Residue T117 coordinates citrate. Positions 133, 164, and 251 each coordinate substrate. D251 is a binding site for Mn(2+). Residue N321 coordinates ADP.

Belongs to the isocitrate and isopropylmalate dehydrogenases family. As to quaternary structure, heterooligomer of subunits alpha (IDH3A), beta (IDH3B), and gamma (IDH3G) in the apparent ratio of 2:1:1. The heterodimer containing one IDH3A and one IDH3B subunit and the heterodimer containing one IDH3A and one IDH3G subunit assemble into a heterotetramer (which contains two subunits of IDH3A, one of IDH3B and one of IDH3G) and further into the heterooctamer. Requires Mg(2+) as cofactor. Mn(2+) is required as a cofactor.

It is found in the mitochondrion. With respect to regulation, the heterotetramer and the heterodimer composed of IDH3A and IDH3G subunits can be allosterically activated by citrate (CIT) or/and ADP, and the two activators can act independently or synergistically. The heterodimer composed of IDH3A and IDH3B subunits cannot be allosterically regulated and the allosteric regulation of the heterotetramer is through the IDH3G subunit and not the IDH3B subunit. The IDH3G subunit contains the allosteric site which consists of a CIT-binding site and an ADP-binding site, and the binding of CIT and ADP causes conformational changes at the allosteric site which are transmitted to the active site in the catalytic subunit (IDH3A) through a cascade of conformational changes at the heterodimer interface, leading to stabilization of the isocitrate-binding at the active site and thus activation of the enzyme. ATP can activate the heterotetramer and the heterodimer composed of IDH3A and IDH3G subunits at low concentrations but inhibits their activities at high concentrations, whereas ATP exhibits only inhibitory effect on the heterodimer composed of IDH3A and IDH3B subunits. In terms of biological role, regulatory subunit which plays a role in the allosteric regulation of the enzyme catalyzing the decarboxylation of isocitrate (ICT) into alpha-ketoglutarate. The heterodimer composed of the alpha (IDH3A) and beta (IDH3B) subunits and the heterodimer composed of the alpha (IDH3A) and gamma (IDH3G) subunits, have considerable basal activity but the full activity of the heterotetramer (containing two subunits of IDH3A, one of IDH3B and one of IDH3G) requires the assembly and cooperative function of both heterodimers. In Mus musculus (Mouse), this protein is Probable isocitrate dehydrogenase [NAD] gamma 2, mitochondrial.